Consider the following 340-residue polypeptide: Phospho-N-acetylmuramoyl-pentapeptide-transferase (340 aa).

The next 9 membrane-spanning stretches (helical) occupy residues 24-44 (VPFGLSVLGSALLGSLLLPVL), 69-89 (TMGGLSFLPVGLLVAGIGSGW), 95-115 (AVALLTLAYTVVGWLDDWLVI), 129-149 (LLLQVGIGLVFCGYLAWQGIP), 156-176 (GIGALPLGWLFWPLALFVLVG), 196-216 (ALVLAGLGLTAADPVLALVAF), 235-255 (LFMGDTGSLGLGGALAGLALL), 260-280 (WALAWMGAVLVAEALSVILQV), and 316-336 (VVGCFYGLTALLVGLGWAWWH).

This sequence belongs to the glycosyltransferase 4 family. MraY subfamily. Mg(2+) is required as a cofactor.

It localises to the cell inner membrane. The enzyme catalyses UDP-N-acetyl-alpha-D-muramoyl-L-alanyl-gamma-D-glutamyl-meso-2,6-diaminopimeloyl-D-alanyl-D-alanine + di-trans,octa-cis-undecaprenyl phosphate = di-trans,octa-cis-undecaprenyl diphospho-N-acetyl-alpha-D-muramoyl-L-alanyl-D-glutamyl-meso-2,6-diaminopimeloyl-D-alanyl-D-alanine + UMP. It functions in the pathway cell wall biogenesis; peptidoglycan biosynthesis. Functionally, catalyzes the initial step of the lipid cycle reactions in the biosynthesis of the cell wall peptidoglycan: transfers peptidoglycan precursor phospho-MurNAc-pentapeptide from UDP-MurNAc-pentapeptide onto the lipid carrier undecaprenyl phosphate, yielding undecaprenyl-pyrophosphoryl-MurNAc-pentapeptide, known as lipid I. This Synechococcus sp. (strain JA-3-3Ab) (Cyanobacteria bacterium Yellowstone A-Prime) protein is Phospho-N-acetylmuramoyl-pentapeptide-transferase.